We begin with the raw amino-acid sequence, 233 residues long: Leucyl/phenylalanyl-tRNA--protein transferase (233 aa).

Belongs to the L/F-transferase family.

Its subcellular location is the cytoplasm. It carries out the reaction N-terminal L-lysyl-[protein] + L-leucyl-tRNA(Leu) = N-terminal L-leucyl-L-lysyl-[protein] + tRNA(Leu) + H(+). The enzyme catalyses N-terminal L-arginyl-[protein] + L-leucyl-tRNA(Leu) = N-terminal L-leucyl-L-arginyl-[protein] + tRNA(Leu) + H(+). It catalyses the reaction L-phenylalanyl-tRNA(Phe) + an N-terminal L-alpha-aminoacyl-[protein] = an N-terminal L-phenylalanyl-L-alpha-aminoacyl-[protein] + tRNA(Phe). In terms of biological role, functions in the N-end rule pathway of protein degradation where it conjugates Leu, Phe and, less efficiently, Met from aminoacyl-tRNAs to the N-termini of proteins containing an N-terminal arginine or lysine. The chain is Leucyl/phenylalanyl-tRNA--protein transferase from Shewanella denitrificans (strain OS217 / ATCC BAA-1090 / DSM 15013).